The primary structure comprises 58 residues: UPF0391 membrane protein Bxeno_A2959 (58 aa).

A run of 2 helical transmembrane segments spans residues 4–24 and 33–53; these read WALF…TGVA and FLFI…FVVT.

This sequence belongs to the UPF0391 family.

It localises to the cell membrane. The chain is UPF0391 membrane protein Bxeno_A2959 from Paraburkholderia xenovorans (strain LB400).